Reading from the N-terminus, the 482-residue chain is UDP-N-acetylmuramate--L-alanine ligase (482 aa).

123–129 (GTHGKTT) is a binding site for ATP.

This sequence belongs to the MurCDEF family.

The protein localises to the cytoplasm. It carries out the reaction UDP-N-acetyl-alpha-D-muramate + L-alanine + ATP = UDP-N-acetyl-alpha-D-muramoyl-L-alanine + ADP + phosphate + H(+). It participates in cell wall biogenesis; peptidoglycan biosynthesis. Functionally, cell wall formation. The protein is UDP-N-acetylmuramate--L-alanine ligase of Pseudomonas entomophila (strain L48).